Here is a 492-residue protein sequence, read N- to C-terminus: Catalase-3 (492 aa).

Residues H65 and N138 contribute to the active site. Y348 is a binding site for heme.

It belongs to the catalase family. Homotetramer. Requires heme as cofactor.

It is found in the peroxisome. The protein resides in the glyoxysome. It catalyses the reaction 2 H2O2 = O2 + 2 H2O. Functionally, occurs in almost all aerobically respiring organisms and serves to protect cells from the toxic effects of hydrogen peroxide. The protein is Catalase-3 (CAT3) of Glycine max (Soybean).